The sequence spans 1366 residues: Protein HUA2-LIKE 2 (1366 aa).

A PWWP domain is found at 24–81 (VGDLVLAKVKGFPAWPAVVSEPEKWDASPDSKKVFVHFFGTQQIAFCNPGDVEAFTEE). Residues 111 to 124 (LKQQERASDPKSAE) show a composition bias toward basic and acidic residues. 5 disordered regions span residues 111 to 138 (LKQQERASDPKSAEEGTLGSAENTTLMP), 203 to 319 (TYSS…SGSK), 384 to 403 (NVQTSQNSHEKFTERPCEEN), 427 to 451 (EANSSLQAEERSPKDTVVSATAQTS), and 787 to 808 (SESANDMQNNSSGSPNIPTGEK). Residues 213–252 (VRSQNCAPQNETCPVQRSKSPSRLQTEKLQSSMLQNSDGG) show a composition bias toward polar residues. Over residues 391–403 (SHEKFTERPCEEN) the composition is skewed to basic and acidic residues. The segment covering 787-803 (SESANDMQNNSSGSPNI) has biased composition (polar residues). Residues 836 to 977 (DVQSTRESYE…HHIRELDSHS (142 aa)) enclose the CID domain. Disordered stretches follow at residues 1027–1076 (LKDE…TAER) and 1128–1366 (TSHQ…QRSD). The segment covering 1032-1052 (GGSDSEGGCDSEGGSDSDGGD) has biased composition (acidic residues). Positions 1057 to 1066 (TPEHESRILE) are enriched in basic and acidic residues. Pro residues predominate over residues 1138-1152 (PPLPSSSPPPPPAPP). The segment covering 1191 to 1223 (LSGSTMHYQGPESSYISGVQLTNSIPQADGSNF) has biased composition (polar residues). The segment covering 1229-1244 (PSHPHPHPPPPPPPPQ) has biased composition (pro residues). 2 stretches are compositionally biased toward basic and acidic residues: residues 1251–1262 (EPGHVLKSHRDA) and 1275–1298 (CDERNFHDNHERMRHAPFENRDNW). Residues 1299–1309 (RYPPSSSYGSR) are compositionally biased toward low complexity.

Expressed throughout young primordia, and vegetative and reproductive apices.

The protein localises to the nucleus. Probable transcription factor that acts with partial redundancy with HULK1 and HULK3. Plays diverse and essential roles in the control of plant development, physiology and flowering time. In Arabidopsis thaliana (Mouse-ear cress), this protein is Protein HUA2-LIKE 2.